The chain runs to 38 residues: Glutathione S-transferase 2 (38 aa).

Belongs to the GST superfamily. Phi family.

The enzyme catalyses RX + glutathione = an S-substituted glutathione + a halide anion + H(+). Its function is as follows. Conjugation of reduced glutathione to a wide number of exogenous and endogenous hydrophobic electrophiles. In plants, may have a detoxification role against certain herbicides. The sequence is that of Glutathione S-transferase 2 from Populus euphratica (Euphrates poplar).